Here is a 103-residue protein sequence, read N- to C-terminus: Floral defensin-like protein 1 (103 aa).

The N-terminal stretch at M1–A25 is a signal peptide. Cystine bridges form between C28-C72, C32-C48, C39-C59, C45-C66, and C49-C68. Positions V73–V103 are cleaved as a propeptide — removed in mature form.

The protein belongs to the DEFL family. Post-translationally, when compared to other plant defensins, the petunia defensins have an additional fifth disulfide bond. As to expression, petals.

It localises to the secreted. The protein resides in the vacuole. In terms of biological role, plant defense peptide with antifungal activity against F.oxysporum and B.cinerea. The protein is Floral defensin-like protein 1 (D1) of Petunia hybrida (Petunia).